A 175-amino-acid polypeptide reads, in one-letter code: NADH-ubiquinone oxidoreductase chain 6 (175 aa).

The next 5 helical transmembrane spans lie at Met1 to Ser21, Ile26 to Leu46, Gly47 to Phe67, Val87 to Ile107, and Trp152 to Thr172.

Belongs to the complex I subunit 6 family.

It localises to the mitochondrion membrane. It catalyses the reaction a ubiquinone + NADH + 5 H(+)(in) = a ubiquinol + NAD(+) + 4 H(+)(out). In terms of biological role, core subunit of the mitochondrial membrane respiratory chain NADH dehydrogenase (Complex I) that is believed to belong to the minimal assembly required for catalysis. Complex I functions in the transfer of electrons from NADH to the respiratory chain. The immediate electron acceptor for the enzyme is believed to be ubiquinone. This Dasypus novemcinctus (Nine-banded armadillo) protein is NADH-ubiquinone oxidoreductase chain 6 (MT-ND6).